We begin with the raw amino-acid sequence, 153 residues long: Aspartate carbamoyltransferase regulatory chain (153 aa).

Zn(2+)-binding residues include cysteine 109, cysteine 114, cysteine 138, and cysteine 141.

It belongs to the PyrI family. In terms of assembly, contains catalytic and regulatory chains. Zn(2+) serves as cofactor.

Its function is as follows. Involved in allosteric regulation of aspartate carbamoyltransferase. This is Aspartate carbamoyltransferase regulatory chain from Vibrio parahaemolyticus serotype O3:K6 (strain RIMD 2210633).